The sequence spans 125 residues: UPF0102 protein ABO_0585 (125 aa).

It belongs to the UPF0102 family.

The protein is UPF0102 protein ABO_0585 of Alcanivorax borkumensis (strain ATCC 700651 / DSM 11573 / NCIMB 13689 / SK2).